The chain runs to 222 residues: Potassium-transporting ATPase KdpC subunit (222 aa).

Residues 13–35 (WAGLRSLLVLTVVTGVLYPLAVT) traverse the membrane as a helical segment. The disordered stretch occupies residues 136–162 (TADHKVKPSDVPADAVTSSGSGLDPDI).

The protein belongs to the KdpC family. As to quaternary structure, the system is composed of three essential subunits: KdpA, KdpB and KdpC.

The protein localises to the cell membrane. In terms of biological role, part of the high-affinity ATP-driven potassium transport (or Kdp) system, which catalyzes the hydrolysis of ATP coupled with the electrogenic transport of potassium into the cytoplasm. This subunit acts as a catalytic chaperone that increases the ATP-binding affinity of the ATP-hydrolyzing subunit KdpB by the formation of a transient KdpB/KdpC/ATP ternary complex. This Streptomyces avermitilis (strain ATCC 31267 / DSM 46492 / JCM 5070 / NBRC 14893 / NCIMB 12804 / NRRL 8165 / MA-4680) protein is Potassium-transporting ATPase KdpC subunit.